The sequence spans 152 residues: ESAT-6 secretion machinery protein EssA (152 aa).

The Cytoplasmic segment spans residues M1–K114. The chain crosses the membrane as a helical span at residues I115 to S135. At I136 to I152 the chain is on the extracellular side.

The protein belongs to the EssA family.

The protein localises to the cell membrane. In terms of biological role, component of the ESAT-6 secretion system (Ess). Required for the secretion of EsxA and EsxB. This chain is ESAT-6 secretion machinery protein EssA, found in Staphylococcus aureus (strain Mu50 / ATCC 700699).